Here is a 199-residue protein sequence, read N- to C-terminus: Protein shisa-like-1 (199 aa).

The first 25 residues, 1–25 (MTSCGQQSLNVLAVLFSLLFSAVLS), serve as a signal peptide directing secretion. The Extracellular segment spans residues 26–97 (AHFRVCEPYT…SEGYMHNNYT (72 aa)). 2 N-linked (GlcNAc...) asparagine glycosylation sites follow: N53 and N95. A helical transmembrane segment spans residues 98-118 (ALLGVWIYGFFVLMLLVLDLL). Topologically, residues 119–199 (YYSAMNYDIC…PLMTFQSSSA (81 aa)) are cytoplasmic. The segment at 146–199 (PRRWGNPARAPRPGQRAPQPQPPPGPLPQAPQAVHTLRGDAHSPPLMTFQSSSA) is disordered. Over residues 152 to 163 (PARAPRPGQRAP) the composition is skewed to low complexity. Over residues 164–174 (QPQPPPGPLPQ) the composition is skewed to pro residues.

The protein belongs to the shisa family.

The protein resides in the membrane. This Homo sapiens (Human) protein is Protein shisa-like-1.